The chain runs to 370 residues: DNA replication and repair protein RecF (370 aa).

ATP is bound at residue 30-37 (GENAQGKT).

The protein belongs to the RecF family.

Its subcellular location is the cytoplasm. In terms of biological role, the RecF protein is involved in DNA metabolism; it is required for DNA replication and normal SOS inducibility. RecF binds preferentially to single-stranded, linear DNA. It also seems to bind ATP. The chain is DNA replication and repair protein RecF from Staphylococcus carnosus (strain TM300).